The following is a 223-amino-acid chain: Cytidylate kinase (223 aa).

Position 10–18 (10–18 (GPAGAGKST)) interacts with ATP.

The protein belongs to the cytidylate kinase family. Type 1 subfamily.

It is found in the cytoplasm. The catalysed reaction is CMP + ATP = CDP + ADP. It carries out the reaction dCMP + ATP = dCDP + ADP. The chain is Cytidylate kinase from Exiguobacterium sibiricum (strain DSM 17290 / CCUG 55495 / CIP 109462 / JCM 13490 / 255-15).